The chain runs to 494 residues: Membrane-bound lytic murein transglycosylase F (494 aa).

A signal peptide spans 1-20 (MIKYLYVILLGLLLSGCQPA). The segment at 21 to 259 (EVVEIEASPK…HLNEKYFGHV (239 aa)) is non-LT domain. The interval 260-494 (KRFDYVDTRA…LKPKLGAGQP (235 aa)) is LT domain. The active site involves glutamate 304. The segment covering 473-485 (QSLASDSKTNNTL) has biased composition (polar residues). Residues 473-494 (QSLASDSKTNNTLKPKLGAGQP) are disordered.

In the N-terminal section; belongs to the bacterial solute-binding protein 3 family. It in the C-terminal section; belongs to the transglycosylase Slt family.

It localises to the cell outer membrane. The catalysed reaction is Exolytic cleavage of the (1-&gt;4)-beta-glycosidic linkage between N-acetylmuramic acid (MurNAc) and N-acetylglucosamine (GlcNAc) residues in peptidoglycan, from either the reducing or the non-reducing ends of the peptidoglycan chains, with concomitant formation of a 1,6-anhydrobond in the MurNAc residue.. Murein-degrading enzyme that degrades murein glycan strands and insoluble, high-molecular weight murein sacculi, with the concomitant formation of a 1,6-anhydromuramoyl product. Lytic transglycosylases (LTs) play an integral role in the metabolism of the peptidoglycan (PG) sacculus. Their lytic action creates space within the PG sacculus to allow for its expansion as well as for the insertion of various structures such as secretion systems and flagella. This Shewanella denitrificans (strain OS217 / ATCC BAA-1090 / DSM 15013) protein is Membrane-bound lytic murein transglycosylase F.